The sequence spans 306 residues: Latrophilin receptor-like protein A (306 aa).

The Extracellular segment spans residues 1–15; sequence MPSQLLNTVLSYLTD. A helical membrane pass occupies residues 16 to 36; sequence ILLSLSIVGSFLTIFTFMLYP. The Cytoplasmic portion of the chain corresponds to 37-41; sequence KLRSY. Residues 42-62 traverse the membrane as a helical segment; that stretch reads PIKLIIYLCMSIVFSLFFFEI. Topologically, residues 63-70 are extracellular; sequence SFRSSNSL. A helical membrane pass occupies residues 71-91; sequence FCIPAAILVHYFFLANFFWTF. Over 92 to 113 the chain is Cytoplasmic; sequence SVSFNFFQMIVKRNRDSEFYER. A helical membrane pass occupies residues 114–134; it reads YYHLISWGIPFIIIIFCAAFK. The Extracellular segment spans residues 135–152; it reads KYVDRGGFCYLEDQYSVY. Residues 153–173 traverse the membrane as a helical segment; the sequence is FGFFMPGVIIVCSNICIYVFV. Over 174 to 196 the chain is Cytoplasmic; it reads AKEIYKTLRHTPTQKRQTVKEFR. The chain crosses the membrane as a helical span at residues 197 to 217; the sequence is VYFSIFVSIGSSWIFGFIYMF. Residues 218–222 lie on the Extracellular side of the membrane; the sequence is SDSNS. Residues 223 to 243 traverse the membrane as a helical segment; that stretch reads IIGYIFLILFSISTSLQGFFI. Residues 244-306 lie on the Cytoplasmic side of the membrane; sequence FISYCLNYKV…TTTTTNVYSA (63 aa). Residues 279–306 form a disordered region; that stretch reads TTQSGPTGTTDSSSTMTSTTTTTNVYSA.

It belongs to the G-protein coupled receptor 2 family. LN-TM7 subfamily.

It localises to the membrane. This Dictyostelium discoideum (Social amoeba) protein is Latrophilin receptor-like protein A (lrlA).